The following is a 371-amino-acid chain: DNA replication and repair protein RecF (371 aa).

30-37 (GANAQGKT) lines the ATP pocket.

It belongs to the RecF family.

Its subcellular location is the cytoplasm. The RecF protein is involved in DNA metabolism; it is required for DNA replication and normal SOS inducibility. RecF binds preferentially to single-stranded, linear DNA. It also seems to bind ATP. The chain is DNA replication and repair protein RecF from Lacticaseibacillus paracasei (strain ATCC 334 / BCRC 17002 / CCUG 31169 / CIP 107868 / KCTC 3260 / NRRL B-441) (Lactobacillus paracasei).